We begin with the raw amino-acid sequence, 1133 residues long: uncharacterized protein (1133 aa).

4 disordered regions span residues 33 to 83 (QFED…NSSS), 305 to 629 (PVSN…NSNS), 679 to 723 (GKLD…SVKR), and 736 to 817 (IESP…SEEV). The span at 39–83 (NNNNSNNNNNNNNSNNNNSNNNENINRKTGSTLLSSSTSQLNSSS) shows a compositional bias: low complexity. A DNA-binding region (NDT80) is located at residues 40–308 (NNNSNNNNNN…GHPTCNPVSN (269 aa)). Polar residues predominate over residues 305–316 (PVSNNPSTPGTP). Over residues 317–384 (ISNFDSSNNN…NNNSSGNSSS (68 aa)) the composition is skewed to low complexity. Polar residues predominate over residues 401–417 (INSLSNHNSPHLTPIQY). A compositionally biased stretch (low complexity) spans 418–452 (NNNNNNSNNNSNNNNNNNNNNNNSNNNNNNSNNNN). Residues 453-470 (HQFQSNNRIFKGNLSNPF) show a composition bias toward polar residues. Composition is skewed to low complexity over residues 473 to 615 (NYSQ…GNNS) and 686 to 714 (NNSN…NNNN). A compositionally biased stretch (polar residues) spans 736-747 (IESPQSYISSPT). Pro residues predominate over residues 757–771 (QPQPQPQPQPQPQPQ). The segment covering 772–808 (PQSQSQSQSQSQSQSQSQSQSQSQPIQQIVQQQLSSP) has biased composition (low complexity). The 112-residue stretch at 909–1020 (SDKRVKENVK…KKVDNVCMEL (112 aa)) folds into the Peptidase S74 domain. The chain crosses the membrane as a helical span at residues 1055–1075 (IFIGIGVFTLFVIFGLVAVSI). Residues 1107 to 1133 (SGSNSCYDSSSNSAIDTTTSTGSGSIK) form a disordered region.

It is found in the membrane. This is an uncharacterized protein from Dictyostelium discoideum (Social amoeba).